Here is a 411-residue protein sequence, read N- to C-terminus: Dihydrofolate synthase/folylpolyglutamate synthase (411 aa).

Position 53–56 (53–56 (GKGT)) interacts with ATP. Serine 77 serves as a coordination point for Mg(2+). 7,8-dihydropteroate is bound by residues 116–119 (TYFE) and 147–149 (LDA). Histidine 167 contacts Mg(2+). ATP is bound by residues arginine 283 and aspartate 296.

It belongs to the folylpolyglutamate synthase family. In terms of assembly, monomer. It depends on Mg(2+) as a cofactor.

The enzyme catalyses 7,8-dihydropteroate + L-glutamate + ATP = 7,8-dihydrofolate + ADP + phosphate + H(+). It carries out the reaction (6S)-5,6,7,8-tetrahydrofolyl-(gamma-L-Glu)(n) + L-glutamate + ATP = (6S)-5,6,7,8-tetrahydrofolyl-(gamma-L-Glu)(n+1) + ADP + phosphate + H(+). The catalysed reaction is 10-formyltetrahydrofolyl-(gamma-L-Glu)(n) + L-glutamate + ATP = 10-formyltetrahydrofolyl-(gamma-L-Glu)(n+1) + ADP + phosphate + H(+). It catalyses the reaction (6R)-5,10-methylenetetrahydrofolyl-(gamma-L-Glu)(n) + L-glutamate + ATP = (6R)-5,10-methylenetetrahydrofolyl-(gamma-L-Glu)(n+1) + ADP + phosphate + H(+). Its pathway is cofactor biosynthesis; tetrahydrofolate biosynthesis; 7,8-dihydrofolate from 2-amino-4-hydroxy-6-hydroxymethyl-7,8-dihydropteridine diphosphate and 4-aminobenzoate: step 2/2. It functions in the pathway cofactor biosynthesis; tetrahydrofolylpolyglutamate biosynthesis. In terms of biological role, functions in two distinct reactions of the de novo folate biosynthetic pathway. Catalyzes the addition of a glutamate residue to dihydropteroate (7,8-dihydropteroate or H2Pte) to form dihydrofolate (7,8-dihydrofolate monoglutamate or H2Pte-Glu). Also catalyzes successive additions of L-glutamate to tetrahydrofolate or 10-formyltetrahydrofolate or 5,10-methylenetetrahydrofolate, leading to folylpolyglutamate derivatives. The protein is Dihydrofolate synthase/folylpolyglutamate synthase (folC) of Buchnera aphidicola subsp. Acyrthosiphon pisum (strain APS) (Acyrthosiphon pisum symbiotic bacterium).